Reading from the N-terminus, the 779-residue chain is Chloride channel protein CLC-c (779 aa).

Position 27 is a phosphoserine (Ser-27). 12 helical membrane passes run 92–112, 142–162, 190–210, 215–235, 257–277, 287–307, 341–361, 380–400, 466–486, 488–508, 520–540, and 541–561; these read TFLKWALAFLIGLATGLVGFL, FAFAGCNLILATAAASLCAFI, STLFVKIFGSIFGVAAGFVVG, MVHTGACIANLLGQGGSKKYR, GAAAGVAAAFRAPVGGVLFAL, ALLWRTFFTTAVVAVVLRSLI, LAIVFLGVIGGVLGSLYNYLV, IMLVMAVSILSSCCAFGLPWL, LAIFFVAVYCLGIITYGIAIP, GLFIPVILAGASYGRLVGRLL, SLLGAASFLGGTMRMTVSLCV, and ILLELTNNLLMLPLVMLVLLI. The CBS 1 domain maps to 601-659; sequence DVVSGALISFSRVEKVGVIWQALKMTRHNGFPVIDEPPFTEASELCGIALRSHLLVLLQ. Ser-672 is subject to Phosphoserine. A CBS 2 domain is found at 713 to 777; that stretch reads ITNTSPYTVL…VLGLYPHIDP (65 aa). A helical transmembrane segment spans residues 741–761; it reads HLCVVPKTPGRPPIVGILTRH.

Belongs to the chloride channel (TC 2.A.49) family. As to quaternary structure, homodimer. Interacts with PP2A5. As to expression, broadly expressed in the plant.

The protein resides in the membrane. Functionally, voltage-gated chloride channel. This Arabidopsis thaliana (Mouse-ear cress) protein is Chloride channel protein CLC-c (CLC-C).